The following is a 346-amino-acid chain: Phosphoribosylformylglycinamidine cyclo-ligase (346 aa).

This sequence belongs to the AIR synthase family.

It is found in the cytoplasm. The catalysed reaction is 2-formamido-N(1)-(5-O-phospho-beta-D-ribosyl)acetamidine + ATP = 5-amino-1-(5-phospho-beta-D-ribosyl)imidazole + ADP + phosphate + H(+). It functions in the pathway purine metabolism; IMP biosynthesis via de novo pathway; 5-amino-1-(5-phospho-D-ribosyl)imidazole from N(2)-formyl-N(1)-(5-phospho-D-ribosyl)glycinamide: step 2/2. This is Phosphoribosylformylglycinamidine cyclo-ligase from Geobacillus thermodenitrificans (strain NG80-2).